We begin with the raw amino-acid sequence, 310 residues long: Conjugation stage-specific protein (310 aa).

It belongs to the archaeal Rpo3/eukaryotic RPB3 RNA polymerase subunit family.

It localises to the nucleus. In terms of biological role, may be a stage-specific RNA polymerase subunit. The chain is Conjugation stage-specific protein (CNJC) from Tetrahymena thermophila.